The chain runs to 84 residues: MSILSFLLGEKKKSASVAKERLQIILAHERTGHSAPADYLPALQRELVAVISKYVKISDQDLRVSLERQDNLEVLEVKIEIPQN.

This sequence belongs to the MinE family.

Functionally, prevents the cell division inhibition by proteins MinC and MinD at internal division sites while permitting inhibition at polar sites. This ensures cell division at the proper site by restricting the formation of a division septum at the midpoint of the long axis of the cell. This Cupriavidus pinatubonensis (strain JMP 134 / LMG 1197) (Cupriavidus necator (strain JMP 134)) protein is Cell division topological specificity factor.